The chain runs to 211 residues: Ribonuclease HII (211 aa).

The RNase H type-2 domain occupies 11 to 200 (EFIAGVDEVG…VKKLLSTLLS (190 aa)). 3 residues coordinate a divalent metal cation: D17, E18, and D109.

It belongs to the RNase HII family. It depends on Mn(2+) as a cofactor. Mg(2+) is required as a cofactor.

It localises to the cytoplasm. The enzyme catalyses Endonucleolytic cleavage to 5'-phosphomonoester.. Endonuclease that specifically degrades the RNA of RNA-DNA hybrids. This is Ribonuclease HII from Histophilus somni (strain 2336) (Haemophilus somnus).